The following is a 274-amino-acid chain: Nitrogenase iron protein (274 aa).

Residue 8–15 (GKGGIGKS) participates in ATP binding. [4Fe-4S] cluster is bound at residue Cys-94. Position 97 is an ADP-ribosylarginine; by dinitrogenase reductase ADP-ribosyltransferase (Arg-97). Residue Cys-131 coordinates [4Fe-4S] cluster.

It belongs to the NifH/BchL/ChlL family. In terms of assembly, homodimer. It depends on [4Fe-4S] cluster as a cofactor. Post-translationally, the reversible ADP-ribosylation of Arg-97 inactivates the nitrogenase reductase and regulates nitrogenase activity.

It catalyses the reaction N2 + 8 reduced [2Fe-2S]-[ferredoxin] + 16 ATP + 16 H2O = H2 + 8 oxidized [2Fe-2S]-[ferredoxin] + 2 NH4(+) + 16 ADP + 16 phosphate + 6 H(+). The key enzymatic reactions in nitrogen fixation are catalyzed by the nitrogenase complex, which has 2 components: the iron protein and the molybdenum-iron protein. The chain is Nitrogenase iron protein from Chlorobium phaeobacteroides (strain DSM 266 / SMG 266 / 2430).